We begin with the raw amino-acid sequence, 347 residues long: Ryncolin-2 (347 aa).

Residues 1 to 19 (MKPWAAFHLIFLVASSLEG) form the signal peptide. The segment at 49–115 (LQSQPGIPGI…DKGDKGDKGD (67 aa)) is disordered. One can recognise a Collagen-like domain in the interval 57–114 (GIPGVPGINGSEGLKGDPGPQGLPGETGFDGIPGVAGPKGDKGDQGDKGDKGDKGDKG). The span at 95 to 115 (KGDKGDQGDKGDKGDKGDKGD) shows a compositional bias: basic and acidic residues. Residues 121–341 (DCPPTDVEVR…YADMKIRPQQ (221 aa)) enclose the Fibrinogen C-terminal domain. Intrachain disulfides connect cysteine 132–cysteine 160 and cysteine 284–cysteine 297.

The protein belongs to the ficolin lectin family. Veficolin subfamily. Post-translationally, hydroxylated, possibly at Pro-74 and Pro-94. In terms of tissue distribution, expressed by the venom duct.

The protein localises to the secreted. Its function is as follows. Initiates complement activation and/or interferes in platelet aggregation and/or blood coagulation. In Cerberus rynchops (Dog-faced water snake), this protein is Ryncolin-2.